A 258-amino-acid chain; its full sequence is Acyl-[acyl-carrier-protein]--UDP-N-acetylglucosamine O-acyltransferase (258 aa).

It belongs to the transferase hexapeptide repeat family. LpxA subfamily. As to quaternary structure, homotrimer.

It localises to the cytoplasm. The catalysed reaction is a (3R)-hydroxyacyl-[ACP] + UDP-N-acetyl-alpha-D-glucosamine = a UDP-3-O-[(3R)-3-hydroxyacyl]-N-acetyl-alpha-D-glucosamine + holo-[ACP]. The protein operates within glycolipid biosynthesis; lipid IV(A) biosynthesis; lipid IV(A) from (3R)-3-hydroxytetradecanoyl-[acyl-carrier-protein] and UDP-N-acetyl-alpha-D-glucosamine: step 1/6. Its function is as follows. Involved in the biosynthesis of lipid A, a phosphorylated glycolipid that anchors the lipopolysaccharide to the outer membrane of the cell. The chain is Acyl-[acyl-carrier-protein]--UDP-N-acetylglucosamine O-acyltransferase from Thermodesulfovibrio yellowstonii (strain ATCC 51303 / DSM 11347 / YP87).